A 311-amino-acid polypeptide reads, in one-letter code: Probable cell division protein WhiA (311 aa).

Positions Ser274–Glu308 form a DNA-binding region, H-T-H motif.

It belongs to the WhiA family.

Functionally, involved in cell division and chromosome segregation. This is Probable cell division protein WhiA from Enterococcus faecalis (strain ATCC 700802 / V583).